A 440-amino-acid polypeptide reads, in one-letter code: Thymidine phosphorylase (440 aa).

The protein belongs to the thymidine/pyrimidine-nucleoside phosphorylase family. Homodimer.

It catalyses the reaction thymidine + phosphate = 2-deoxy-alpha-D-ribose 1-phosphate + thymine. It participates in pyrimidine metabolism; dTMP biosynthesis via salvage pathway; dTMP from thymine: step 1/2. The enzymes which catalyze the reversible phosphorolysis of pyrimidine nucleosides are involved in the degradation of these compounds and in their utilization as carbon and energy sources, or in the rescue of pyrimidine bases for nucleotide synthesis. This chain is Thymidine phosphorylase, found in Salmonella dublin (strain CT_02021853).